A 106-amino-acid chain; its full sequence is Large ribosomal subunit protein uL24 (106 aa).

Belongs to the universal ribosomal protein uL24 family. Part of the 50S ribosomal subunit.

One of two assembly initiator proteins, it binds directly to the 5'-end of the 23S rRNA, where it nucleates assembly of the 50S subunit. In terms of biological role, one of the proteins that surrounds the polypeptide exit tunnel on the outside of the subunit. This chain is Large ribosomal subunit protein uL24, found in Clostridium acetobutylicum (strain ATCC 824 / DSM 792 / JCM 1419 / IAM 19013 / LMG 5710 / NBRC 13948 / NRRL B-527 / VKM B-1787 / 2291 / W).